A 192-amino-acid chain; its full sequence is 3-hydroxyanthranilate 3,4-dioxygenase (192 aa).

R50 is an O2 binding site. Positions 54, 60, and 102 each coordinate Fe cation. Residue E60 participates in substrate binding. Substrate-binding residues include R106 and E116. Residues C131, C134, C168, and C171 each contribute to the a divalent metal cation site.

Belongs to the 3-HAO family. Requires Fe(2+) as cofactor.

The protein resides in the cytoplasm. The enzyme catalyses 3-hydroxyanthranilate + O2 = (2Z,4Z)-2-amino-3-carboxymuconate 6-semialdehyde. Its pathway is cofactor biosynthesis; NAD(+) biosynthesis; quinolinate from L-kynurenine: step 3/3. Its function is as follows. Catalyzes the oxidative ring opening of 3-hydroxyanthranilate to 2-amino-3-carboxymuconate semialdehyde, which spontaneously cyclizes to quinolinate. In Coccidioides immitis (strain RS) (Valley fever fungus), this protein is 3-hydroxyanthranilate 3,4-dioxygenase.